Reading from the N-terminus, the 105-residue chain is UPF0145 protein lpp0255 (105 aa).

The protein belongs to the UPF0145 family.

The chain is UPF0145 protein lpp0255 from Legionella pneumophila (strain Paris).